The primary structure comprises 216 residues: MOB kinase activator 3C (216 aa).

Positions 82, 87, 164, and 169 each coordinate Zn(2+).

Belongs to the MOB1/phocein family.

May regulate the activity of kinases. The sequence is that of MOB kinase activator 3C (Mob3c) from Mus musculus (Mouse).